The chain runs to 366 residues: Cobalt-precorrin-5B C(1)-methyltransferase (366 aa).

The protein belongs to the CbiD family.

The catalysed reaction is Co-precorrin-5B + S-adenosyl-L-methionine = Co-precorrin-6A + S-adenosyl-L-homocysteine. The protein operates within cofactor biosynthesis; adenosylcobalamin biosynthesis; cob(II)yrinate a,c-diamide from sirohydrochlorin (anaerobic route): step 6/10. Its function is as follows. Catalyzes the methylation of C-1 in cobalt-precorrin-5B to form cobalt-precorrin-6A. This chain is Cobalt-precorrin-5B C(1)-methyltransferase, found in Thermus thermophilus (strain ATCC BAA-163 / DSM 7039 / HB27).